The following is a 528-amino-acid chain: Protein spinster homolog 1 (528 aa).

Positions 1–44 (MSGSDTAPFLSQADDTDDGPAPGTPGLPGSMGNPKSEDPAVPDQ) are disordered. Transmembrane regions (helical) follow at residues 50–70 (ITGL…YINL), 98–118 (GLIQ…FGYL), 126–146 (YLMC…SFIP), 160–180 (VGVG…DLFV), 187–207 (MLSV…IAGS), 218–238 (WALR…FLVV), 278–298 (LGFT…PAFL), 323–343 (LIFG…GVEI), 357–377 (LVCA…LACA), 381–401 (IVAT…NWAI), 421–441 (FQIV…IGSI), and 465–485 (MLCA…AIFI). Phosphoserine is present on serine 518.

The protein belongs to the major facilitator superfamily. Spinster (TC 2.A.1.49) family. As to quaternary structure, interacts with BCL2 and BCL2L1.

The protein localises to the lysosome membrane. It carries out the reaction a 1-acyl-sn-glycero-3-phosphocholine(out) + H(+)(out) = a 1-acyl-sn-glycero-3-phosphocholine(in) + H(+)(in). The enzyme catalyses 1-hexadecanoyl-sn-glycero-3-phosphocholine(out) + H(+)(out) = 1-hexadecanoyl-sn-glycero-3-phosphocholine(in) + H(+)(in). It catalyses the reaction 1-(9Z-octadecenoyl)-sn-glycero-3-phosphocholine(out) + H(+)(out) = 1-(9Z-octadecenoyl)-sn-glycero-3-phosphocholine(in) + H(+)(in). The catalysed reaction is 1-(5Z,8Z,11Z,14Z-eicosatetraenoyl)-sn-glycero-3-phosphocholine(out) + H(+)(out) = 1-(5Z,8Z,11Z,14Z-eicosatetraenoyl)-sn-glycero-3-phosphocholine(in) + H(+)(in). It carries out the reaction 1-(4Z,7Z,10Z,13Z,16Z,19Z-docosahexaenoyl)-sn-glycero-3-phosphocholine(out) + H(+)(out) = 1-(4Z,7Z,10Z,13Z,16Z,19Z-docosahexaenoyl)-sn-glycero-3-phosphocholine(in) + H(+)(in). The enzyme catalyses a 1-acyl-sn-glycero-3-phosphoethanolamine(out) + H(+)(out) = a 1-acyl-sn-glycero-3-phosphoethanolamine(in) + H(+)(in). It catalyses the reaction 1-(9Z-octadecenoyl)-sn-glycero-3-phosphoethanolamine(out) + H(+)(out) = 1-(9Z-octadecenoyl)-sn-glycero-3-phosphoethanolamine(in) + H(+)(in). The catalysed reaction is 1-acyl-sn-glycero-3-phospho-(1'-sn-glycerol)(out) + H(+)(out) = 1-acyl-sn-glycero-3-phospho-(1'-sn-glycerol)(in) + H(+)(in). It carries out the reaction 1-(9Z-octadecenoyl)-sn-glycero-3-phospho-(1'-sn-glycerol)(out) + H(+)(out) = 1-(9Z-octadecenoyl)-sn-glycero-3-phospho-(1'-sn-glycerol)(in) + H(+)(in). The enzyme catalyses a 1-O-(1Z-alkenyl)-sn-glycero-3-phosphocholine(out) + H(+)(out) = a 1-O-(1Z-alkenyl)-sn-glycero-3-phosphocholine(in) + H(+)(in). It catalyses the reaction 1-(1Z-hexadecenyl)-sn-glycero-3-phosphocholine(out) + H(+)(out) = 1-(1Z-hexadecenyl)-sn-glycero-3-phosphocholine(in) + H(+)(in). The catalysed reaction is a 1-O-(1Z-alkenyl)-sn-glycero-3-phosphoethanolamine(out) + H(+)(out) = a 1-O-(1Z-alkenyl)-sn-glycero-3-phosphoethanolamine(in) + H(+)(in). It carries out the reaction 1-O-(1Z-hexadecenyl)-sn-glycero-3-phosphoethanolamine(out) + H(+)(out) = 1-O-(1Z-hexadecenyl)-sn-glycero-3-phosphoethanolamine(in) + H(+)(in). Functionally, plays a critical role in the phospholipid salvage pathway from lysosomes to the cytosol. Mediates the rate-limiting, proton-dependent, lysosomal efflux of lysophospholipids, which can then be reacylated by acyltransferases in the endoplasmic reticulum to form phospholipids. Selective for zwitterionic headgroups such as lysophosphatidylcholine (LPC) and lysophosphatidylethanolamine (LPE), can also transport lysophosphatidylglycerol (LPG), but not other anionic lysophospholipids, sphingosine, nor sphingomyelin. Transports lysophospholipids with saturated, monounsaturated, and polyunsaturated fatty acids, such as 1-hexadecanoyl-sn-glycero-3-phosphocholine, 1-(9Z-octadecenoyl)-sn-glycero-3-phosphocholine and 1-(4Z,7Z,10Z,13Z,16Z,19Z-docosahexaenoyl)-sn-glycero-3-phosphocholine, respectively. Can also transport lysoplasmalogen (LPC with a fatty alcohol) such as 1-(1Z-hexadecenyl)-sn-glycero-3-phosphocholine. Essential player in lysosomal homeostasis. Crucial for cell survival under conditions of nutrient limitation. May be involved in necrotic or autophagic cell death. The sequence is that of Protein spinster homolog 1 (SPNS1) from Bos taurus (Bovine).